Consider the following 791-residue polypeptide: Outer membrane protein assembly factor BamA (791 aa).

POTRA domains follow at residues 59–130, 131–209, 212–298, 301–383, and 386–459; these read NAIA…VTEK, PRID…VEEG, LYIK…VKEG, YKLG…IRKR, and VYIN…VKEQ.

This sequence belongs to the BamA family. Part of the Bam complex.

Its subcellular location is the cell outer membrane. Functionally, part of the outer membrane protein assembly complex, which is involved in assembly and insertion of beta-barrel proteins into the outer membrane. The chain is Outer membrane protein assembly factor BamA from Nitratidesulfovibrio vulgaris (strain ATCC 29579 / DSM 644 / CCUG 34227 / NCIMB 8303 / VKM B-1760 / Hildenborough) (Desulfovibrio vulgaris).